We begin with the raw amino-acid sequence, 214 residues long: Protein-L-isoaspartate O-methyltransferase (214 aa).

Residue Ser-63 is part of the active site.

It belongs to the methyltransferase superfamily. L-isoaspartyl/D-aspartyl protein methyltransferase family.

It is found in the cytoplasm. The enzyme catalyses [protein]-L-isoaspartate + S-adenosyl-L-methionine = [protein]-L-isoaspartate alpha-methyl ester + S-adenosyl-L-homocysteine. Its function is as follows. Catalyzes the methyl esterification of L-isoaspartyl residues in peptides and proteins that result from spontaneous decomposition of normal L-aspartyl and L-asparaginyl residues. It plays a role in the repair and/or degradation of damaged proteins. In Desulfotalea psychrophila (strain LSv54 / DSM 12343), this protein is Protein-L-isoaspartate O-methyltransferase.